A 186-amino-acid polypeptide reads, in one-letter code: Small ribosomal subunit protein uS7 (186 aa).

It belongs to the universal ribosomal protein uS7 family. Part of the 30S ribosomal subunit.

One of the primary rRNA binding proteins, it binds directly to 16S rRNA where it nucleates assembly of the head domain of the 30S subunit. Is located at the subunit interface close to the decoding center. The chain is Small ribosomal subunit protein uS7 from Methanococcoides burtonii (strain DSM 6242 / NBRC 107633 / OCM 468 / ACE-M).